Here is a 1036-residue protein sequence, read N- to C-terminus: Protein P200 (1036 aa).

Residues 697-727 (ETSELNTESDPSFEPEVEIQPEPEPNFDLET) form a disordered region. The segment covering 707–727 (PSFEPEVEIQPEPEPNFDLET) has biased composition (acidic residues). Tandem repeats lie at residues 718 to 723 (EPEPNF), 738 to 743 (EPEPNF), and 776 to 781 (EPEPNF). Residues 718-781 (EPEPNFDLET…SFESEPEPNF (64 aa)) form a 3 X 6 AA repeats of E-P-E-P-N-F region. Disordered regions lie at residues 757–784 (FESETEVQQELAQESSFESEPEPNFETE) and 798–845 (EAEV…ETEA). The span at 773 to 784 (FESEPEPNFETE) shows a compositional bias: acidic residues.

It is found in the cell projection. The protein localises to the attachment organelle. Protein cytoskeleton-associated which plays a role in gliding motility and perhaps also in mucociliary clearance. In Mycoplasma pneumoniae (strain ATCC 29342 / M129 / Subtype 1) (Mycoplasmoides pneumoniae), this protein is Protein P200 (p200).